The following is a 214-amino-acid chain: UPF0111 protein MJ0629 (214 aa).

This sequence belongs to the UPF0111 family.

The protein is UPF0111 protein MJ0629 of Methanocaldococcus jannaschii (strain ATCC 43067 / DSM 2661 / JAL-1 / JCM 10045 / NBRC 100440) (Methanococcus jannaschii).